Here is a 123-residue protein sequence, read N- to C-terminus: Translation initiation factor 1A (123 aa).

A compositionally biased stretch (acidic residues) spans 1-11 (MSPDKTEDEDK). Residues 1 to 26 (MSPDKTEDEDKDVNVDQDQFNEEEES) are disordered. The region spanning 28–102 (GRVILPNKKK…EKADVVYRYT (75 aa)) is the S1-like domain.

It belongs to the eIF-1A family.

In terms of biological role, seems to be required for maximal rate of protein biosynthesis. Enhances ribosome dissociation into subunits and stabilizes the binding of the initiator Met-tRNA(I) to 40 S ribosomal subunits. This is Translation initiation factor 1A (eIF1A) from Thermoplasma volcanium (strain ATCC 51530 / DSM 4299 / JCM 9571 / NBRC 15438 / GSS1).